Reading from the N-terminus, the 432-residue chain is Histidine--tRNA ligase (432 aa).

The protein belongs to the class-II aminoacyl-tRNA synthetase family.

It is found in the cytoplasm. The catalysed reaction is tRNA(His) + L-histidine + ATP = L-histidyl-tRNA(His) + AMP + diphosphate + H(+). This Halobacterium salinarum (strain ATCC 29341 / DSM 671 / R1) protein is Histidine--tRNA ligase.